We begin with the raw amino-acid sequence, 317 residues long: Protoheme IX farnesyltransferase (317 aa).

8 helical membrane passes run Phe25–Met45, Pro54–Leu74, Leu126–Leu146, Ile154–Gly174, Leu181–Val201, Ile227–Leu244, Leu249–His271, and Ala281–Leu301.

This sequence belongs to the UbiA prenyltransferase family. Protoheme IX farnesyltransferase subfamily.

The protein localises to the cell inner membrane. It catalyses the reaction heme b + (2E,6E)-farnesyl diphosphate + H2O = Fe(II)-heme o + diphosphate. It participates in porphyrin-containing compound metabolism; heme O biosynthesis; heme O from protoheme: step 1/1. Converts heme B (protoheme IX) to heme O by substitution of the vinyl group on carbon 2 of heme B porphyrin ring with a hydroxyethyl farnesyl side group. This chain is Protoheme IX farnesyltransferase, found in Methylobacterium sp. (strain 4-46).